Here is a 278-residue protein sequence, read N- to C-terminus: Probable endonuclease 4 (278 aa).

Positions 66, 106, 140, 172, 175, 209, 222, 224, and 254 each coordinate Zn(2+).

Belongs to the AP endonuclease 2 family. The cofactor is Zn(2+).

It carries out the reaction Endonucleolytic cleavage to 5'-phosphooligonucleotide end-products.. In terms of biological role, endonuclease IV plays a role in DNA repair. It cleaves phosphodiester bonds at apurinic or apyrimidinic (AP) sites, generating a 3'-hydroxyl group and a 5'-terminal sugar phosphate. The protein is Probable endonuclease 4 of Haloquadratum walsbyi (strain DSM 16790 / HBSQ001).